Consider the following 383-residue polypeptide: MDLYEHQARELFKEHGIVVPRAEVTDSPERAREIARALGGRAVVKAQVKTGGRGKAGGVRLAADPAEAEEAARHILGMDIRGHTVDTVMLAEPCEIEREFYVSYVLDRASGGFLAIASAEGGTEIEEVAARRPEAVARIPVDPATGVHTATAVRIADAAGLPPQTVDTLVRLWKVLVREDALLVEVNPLVRTAEGRIVALDGKVTLDDNARFRQSRWGETRQEDADSLEARAGAKGLNYVKLDGEVGVIGNGAGLVMSTLDVVAGCGARPANFLDIGGGASARVMADGLSVVLSDPDVRSVLVNVFGGITACDAVADGIVRALDEVRLTKPLVVRLDGNNAARGRALLDARAHPLVEQATTMDGAARRAARLATAASTAGQAG.

The 223-residue stretch at 9-231 (RELFKEHGIV…QEDADSLEAR (223 aa)) folds into the ATP-grasp domain. ATP is bound by residues Lys45, 52 to 54 (GRG), Cys94, and Glu99. 2 residues coordinate Mg(2+): Asn187 and Asp201. Substrate contacts are provided by residues Asn251 and 308–310 (GIT).

It belongs to the succinate/malate CoA ligase beta subunit family. As to quaternary structure, heterotetramer of two alpha and two beta subunits. The cofactor is Mg(2+).

The catalysed reaction is succinate + ATP + CoA = succinyl-CoA + ADP + phosphate. It catalyses the reaction GTP + succinate + CoA = succinyl-CoA + GDP + phosphate. The protein operates within carbohydrate metabolism; tricarboxylic acid cycle; succinate from succinyl-CoA (ligase route): step 1/1. Functionally, succinyl-CoA synthetase functions in the citric acid cycle (TCA), coupling the hydrolysis of succinyl-CoA to the synthesis of either ATP or GTP and thus represents the only step of substrate-level phosphorylation in the TCA. The beta subunit provides nucleotide specificity of the enzyme and binds the substrate succinate, while the binding sites for coenzyme A and phosphate are found in the alpha subunit. This chain is Succinate--CoA ligase [ADP-forming] subunit beta 2, found in Streptomyces coelicolor (strain ATCC BAA-471 / A3(2) / M145).